Reading from the N-terminus, the 35-residue chain is Antimicrobial peptide 3 (35 aa).

One can recognise a Chitin-binding type-1 domain in the interval 4 to 35 (GGECGGRFGGCAGGQCCSRFGFCGSGPKYCAH). 3 disulfides stabilise this stretch: Cys7–Cys20, Cys14–Cys26, and Cys19–Cys33.

Post-translationally, contains 3 disulfide bonds. As to expression, expressed in leaf, flower, stem and seed with highest expression in leaf (at protein level).

Functionally, has antifungal activity against A.niger (IC(50)=5.4 uM), B.sorokiniana (IC(50)=2.0 uM), B.cinerea (IC(50)=1.6 uM), F.solani (IC(50)=3.7 uM) and A.alternata (IC(50)=5.0 uM). Binds chitin in vitro. Has no antibacterial activity at concentrations up to 10 uM. The protein is Antimicrobial peptide 3 of Stellaria media (Common chickweed).